The chain runs to 208 residues: Large ribosomal subunit protein uL4 (208 aa).

The protein belongs to the universal ribosomal protein uL4 family. As to quaternary structure, part of the 50S ribosomal subunit.

Functionally, one of the primary rRNA binding proteins, this protein initially binds near the 5'-end of the 23S rRNA. It is important during the early stages of 50S assembly. It makes multiple contacts with different domains of the 23S rRNA in the assembled 50S subunit and ribosome. Forms part of the polypeptide exit tunnel. This Anaplasma marginale (strain Florida) protein is Large ribosomal subunit protein uL4.